Here is a 354-residue protein sequence, read N- to C-terminus: Biotin synthase (354 aa).

Residues 41–265 enclose the Radical SAM core domain; it reads NEVQISRLLS…LMPHSRVRLS (225 aa). [4Fe-4S] cluster is bound by residues cysteine 56, cysteine 60, and cysteine 63. Positions 100, 131, 191, and 263 each coordinate [2Fe-2S] cluster.

The protein belongs to the radical SAM superfamily. Biotin synthase family. Homodimer. [4Fe-4S] cluster is required as a cofactor. [2Fe-2S] cluster serves as cofactor.

It carries out the reaction (4R,5S)-dethiobiotin + (sulfur carrier)-SH + 2 reduced [2Fe-2S]-[ferredoxin] + 2 S-adenosyl-L-methionine = (sulfur carrier)-H + biotin + 2 5'-deoxyadenosine + 2 L-methionine + 2 oxidized [2Fe-2S]-[ferredoxin]. It participates in cofactor biosynthesis; biotin biosynthesis; biotin from 7,8-diaminononanoate: step 2/2. Catalyzes the conversion of dethiobiotin (DTB) to biotin by the insertion of a sulfur atom into dethiobiotin via a radical-based mechanism. The chain is Biotin synthase from Shewanella woodyi (strain ATCC 51908 / MS32).